Reading from the N-terminus, the 108-residue chain is ATP-dependent Clp protease adapter protein ClpS (108 aa).

This sequence belongs to the ClpS family. As to quaternary structure, binds to the N-terminal domain of the chaperone ClpA.

In terms of biological role, involved in the modulation of the specificity of the ClpAP-mediated ATP-dependent protein degradation. The sequence is that of ATP-dependent Clp protease adapter protein ClpS from Cupriavidus metallidurans (strain ATCC 43123 / DSM 2839 / NBRC 102507 / CH34) (Ralstonia metallidurans).